The following is a 105-amino-acid chain: Met repressor (105 aa).

The protein belongs to the MetJ family. In terms of assembly, homodimer.

It is found in the cytoplasm. In terms of biological role, this regulatory protein, when combined with SAM (S-adenosylmethionine) represses the expression of the methionine regulon and of enzymes involved in SAM synthesis. In Haemophilus influenzae (strain 86-028NP), this protein is Met repressor.